The chain runs to 228 residues: L-ribulose-5-phosphate 4-epimerase UlaF (228 aa).

Substrate contacts are provided by residues 26-27, 43-44, and 72-73; these read GN, SG, and SS. Zn(2+)-binding residues include D74, H93, and H95. Residue D118 is the Proton donor/acceptor of the active site. H167 serves as a coordination point for Zn(2+). Y225 functions as the Proton donor/acceptor in the catalytic mechanism.

It belongs to the aldolase class II family. AraD/FucA subfamily. The cofactor is Zn(2+).

It catalyses the reaction L-ribulose 5-phosphate = D-xylulose 5-phosphate. It participates in cofactor degradation; L-ascorbate degradation; D-xylulose 5-phosphate from L-ascorbate: step 4/4. Functionally, catalyzes the isomerization of L-ribulose 5-phosphate to D-xylulose 5-phosphate. Is involved in the anaerobic L-ascorbate utilization. The sequence is that of L-ribulose-5-phosphate 4-epimerase UlaF from Escherichia coli O45:K1 (strain S88 / ExPEC).